Consider the following 880-residue polypeptide: GRB2-associated and regulator of MAPK protein 2 (880 aa).

Residues 12 to 320 (RWSMGAFPLD…HFLLLTDTPR (309 aa)) are CABIT. Disordered regions lie at residues 385 to 407 (PGAVRAPGPPGRLGPALPAPGDS), 461 to 483 (IVGPPRHEPEAPPPPVPPKSEAV), 527 to 548 (SSLSYYSSGLQDGAGSRSGSGS), 569 to 611 (SESS…ADTP), and 633 to 713 (APFG…ELGQ). 2 stretches are compositionally biased toward low complexity: residues 640–663 (PFSGPAHPSGAPAASSSGSISTSG) and 683–696 (QGYSAAPSSSLSSS). The residue at position 740 (S740) is a Phosphoserine. Residues 813–877 (SALSLEEVSR…KIMQFIKGWR (65 aa)) form the SAM domain.

The protein belongs to the GAREM family.

Functionally, probable adapter protein that provides a critical link between cell surface epidermal growth factor receptor and the MAPK/ERK signaling pathway. The chain is GRB2-associated and regulator of MAPK protein 2 (Garem2) from Mus musculus (Mouse).